A 429-amino-acid polypeptide reads, in one-letter code: UDP-N-acetylglucosamine 1-carboxyvinyltransferase 2 (429 aa).

Residue 22–23 (KN) participates in phosphoenolpyruvate binding. Arg-93 contributes to the UDP-N-acetyl-alpha-D-glucosamine binding site. The active-site Proton donor is Cys-117. At Cys-117 the chain carries 2-(S-cysteinyl)pyruvic acid O-phosphothioketal. UDP-N-acetyl-alpha-D-glucosamine is bound by residues 122 to 126 (RPIDQ), Asp-305, and Ile-327.

This sequence belongs to the EPSP synthase family. MurA subfamily.

The protein resides in the cytoplasm. It catalyses the reaction phosphoenolpyruvate + UDP-N-acetyl-alpha-D-glucosamine = UDP-N-acetyl-3-O-(1-carboxyvinyl)-alpha-D-glucosamine + phosphate. Its pathway is cell wall biogenesis; peptidoglycan biosynthesis. In terms of biological role, cell wall formation. Adds enolpyruvyl to UDP-N-acetylglucosamine. In Bacillus cereus (strain ATCC 14579 / DSM 31 / CCUG 7414 / JCM 2152 / NBRC 15305 / NCIMB 9373 / NCTC 2599 / NRRL B-3711), this protein is UDP-N-acetylglucosamine 1-carboxyvinyltransferase 2.